A 110-amino-acid polypeptide reads, in one-letter code: Iron-sulfur cluster insertion protein ErpA (110 aa).

Iron-sulfur cluster is bound by residues C38, C102, and C104.

This sequence belongs to the HesB/IscA family. As to quaternary structure, homodimer. Iron-sulfur cluster is required as a cofactor.

In terms of biological role, required for insertion of 4Fe-4S clusters for at least IspG. The sequence is that of Iron-sulfur cluster insertion protein ErpA from Marinobacter nauticus (strain ATCC 700491 / DSM 11845 / VT8) (Marinobacter aquaeolei).